A 286-amino-acid chain; its full sequence is Shikimate dehydrogenase (NADP(+)) (286 aa).

Shikimate-binding positions include 20 to 22 and S67; that span reads SLS. The active-site Proton acceptor is K71. The shikimate site is built by N92 and D107. NADP(+) is bound by residues 131–135 and A230; that span reads GGGGA. Y232 contributes to the shikimate binding site. An NADP(+)-binding site is contributed by G253.

This sequence belongs to the shikimate dehydrogenase family. In terms of assembly, homodimer.

The catalysed reaction is shikimate + NADP(+) = 3-dehydroshikimate + NADPH + H(+). Its pathway is metabolic intermediate biosynthesis; chorismate biosynthesis; chorismate from D-erythrose 4-phosphate and phosphoenolpyruvate: step 4/7. In terms of biological role, involved in the biosynthesis of the chorismate, which leads to the biosynthesis of aromatic amino acids. Catalyzes the reversible NADPH linked reduction of 3-dehydroshikimate (DHSA) to yield shikimate (SA). The chain is Shikimate dehydrogenase (NADP(+)) from Lactococcus lactis subsp. cremoris (strain SK11).